The sequence spans 180 residues: Large ribosomal subunit protein uL5 (180 aa).

Belongs to the universal ribosomal protein uL5 family. Part of the 50S ribosomal subunit; part of the 5S rRNA/L5/L18/L25 subcomplex. Contacts the 5S rRNA and the P site tRNA. Forms a bridge to the 30S subunit in the 70S ribosome.

This is one of the proteins that bind and probably mediate the attachment of the 5S RNA into the large ribosomal subunit, where it forms part of the central protuberance. In the 70S ribosome it contacts protein S13 of the 30S subunit (bridge B1b), connecting the 2 subunits; this bridge is implicated in subunit movement. Contacts the P site tRNA; the 5S rRNA and some of its associated proteins might help stabilize positioning of ribosome-bound tRNAs. The polypeptide is Large ribosomal subunit protein uL5 (Pediococcus pentosaceus (strain ATCC 25745 / CCUG 21536 / LMG 10740 / 183-1w)).